A 284-amino-acid chain; its full sequence is Extracellular metalloprotease VDBG_01143 (284 aa).

The first 18 residues, 1 to 18 (MLFKSLFVAAATAVGVSG), serve as a signal peptide directing secretion. N-linked (GlcNAc...) asparagine glycosylation occurs at Asn-58. Zn(2+) is bound at residue His-200. Glu-201 is an active-site residue. His-204 lines the Zn(2+) pocket. A disulfide bridge connects residues Cys-236 and Cys-263.

Belongs to the peptidase M43B family.

The protein localises to the secreted. In terms of biological role, secreted metalloproteinase that allows assimilation of proteinaceous substrates. This Verticillium alfalfae (strain VaMs.102 / ATCC MYA-4576 / FGSC 10136) (Verticillium wilt of alfalfa) protein is Extracellular metalloprotease VDBG_01143.